A 730-amino-acid polypeptide reads, in one-letter code: Diacylglycerol kinase alpha (730 aa).

EF-hand domains are found at residues Arg-111–Val-146 and Glu-156–Leu-191. Ca(2+)-binding residues include Asp-124, Asp-126, Asn-128, Glu-135, Asp-169, Asp-171, Ser-173, Ser-175, and Glu-180. 2 consecutive Phorbol-ester/DAG-type zinc fingers follow at residues Asn-206–Cys-254 and Ser-270–Cys-320. The DAGKc domain maps to Ser-368–Pro-501. An N6-acetyllysine modification is found at Lys-479.

The protein belongs to the eukaryotic diacylglycerol kinase family. Monomer.

The protein localises to the cytoplasm. It localises to the cytosol. It carries out the reaction a 1,2-diacyl-sn-glycerol + ATP = a 1,2-diacyl-sn-glycero-3-phosphate + ADP + H(+). The enzyme catalyses a 1-O-alkyl-sn-glycerol + ATP = a 1-O-alkyl-sn-glycero-3-phosphate + ADP + H(+). The catalysed reaction is 1-O-alkyl-2-acyl-sn-glycerol + ATP = 1-O-alkyl-2-acyl-sn-glycero-3-phosphate + ADP + H(+). It catalyses the reaction 1,2-dihexadecanoyl-sn-glycerol + ATP = 1,2-dihexadecanoyl-sn-glycero-3-phosphate + ADP + H(+). It carries out the reaction 1-hexadecanoyl-2-(9Z-octadecenoyl)-sn-glycerol + ATP = 1-hexadecanoyl-2-(9Z-octadecenoyl)-sn-glycero-3-phosphate + ADP + H(+). The enzyme catalyses 2-(9Z-octadecenoyl)-glycerol + ATP = 2-(9Z-octadecenoyl)-sn-glycero-3-phosphate + ADP + H(+). The catalysed reaction is 1,2-di-(9Z-octadecenoyl)-sn-glycerol + ATP = 1,2-di-(9Z-octadecenoyl)-sn-glycero-3-phosphate + ADP + H(+). It catalyses the reaction 1-octadecanoyl-2-(5Z,8Z,11Z,14Z-eicosatetraenoyl)-sn-glycerol + ATP = 1-octadecanoyl-2-(5Z,8Z,11Z,14Z-eicosatetraenoyl)-sn-glycero-3-phosphate + ADP + H(+). It carries out the reaction 1,2-didecanoyl-sn-glycerol + ATP = 1,2-didecanoyl-sn-glycero-3-phosphate + ADP + H(+). The enzyme catalyses 1-O-hexadecyl-2-acetyl-sn-glycerol + ATP = 1-O-hexadecyl-2-acetyl-sn-glycero-3-phosphate + ADP + H(+). The catalysed reaction is 1-O-hexadecyl-2-(5Z,8Z,11Z,14Z-eicosatetraenoyl)-sn-glycerol + ATP = 1-O-hexadecyl-2-(5Z,8Z,11Z,14Z-eicosatetraenoyl)-sn-glycero-3-phosphate + ADP + H(+). It catalyses the reaction 1-O-hexadecyl-2-(9Z-octadecenoyl)-sn-glycerol + ATP = 1-O-hexadecyl-2-(9Z-octadecenoyl)-sn-glycero-3-phosphate + ADP + H(+). It carries out the reaction 1-O-hexadecyl-sn-glycerol + ATP = 1-O-hexadecyl-sn-glycero-3-phosphate + ADP + H(+). Its pathway is lipid metabolism; glycerolipid metabolism. With respect to regulation, stimulated by calcium and phosphatidylserine. In terms of biological role, diacylglycerol kinase that converts diacylglycerol/DAG into phosphatidic acid/phosphatidate/PA and regulates the respective levels of these two bioactive lipids. Thereby, acts as a central switch between the signaling pathways activated by these second messengers with different cellular targets and opposite effects in numerous biological processes. Also plays an important role in the biosynthesis of complex lipids. Can also phosphorylate 1-alkyl-2-acylglycerol in vitro as efficiently as diacylglycerol provided it contains an arachidonoyl group. Also involved in the production of alkyl-lysophosphatidic acid, another bioactive lipid, through the phosphorylation of 1-alkyl-2-acetyl glycerol. In Mus musculus (Mouse), this protein is Diacylglycerol kinase alpha (Dgka).